A 174-amino-acid polypeptide reads, in one-letter code: Myelin basic protein (174 aa).

A disordered region spans residues 1–86; sequence MASQKRSSFR…GRPGDDNPVV (86 aa). Ala-2 is subject to N-acetylalanine; in forms C1, C2 and C3. Residue Gln-4 is modified to Deamidated glutamine; in forms C1 and C2; partial. At Ser-8 the chain carries Phosphoserine; in forms C2 and C3. At Ser-19 the chain carries Phosphoserine; in form C2. Over residues 22–35 the composition is skewed to basic and acidic residues; the sequence is DHARHGSPRHRDSG. Arg-25 bears the Citrulline; in forms C1, C2 and C3 mark. Ser-34 is subject to Phosphoserine; in forms C2 and C3. Arg-42 is subject to Citrulline; in form C3. A compositionally biased stretch (basic and acidic residues) spans 45-61; sequence GGDRHVPRRGFGKDIHA. The residue at position 65 (Ser-65) is a Phosphoserine; in forms C2 and C3. Gln-72 carries the post-translational modification Deamidated glutamine; in forms C1, C2 and C3; partial. Ser-74 is modified (phosphoserine; in form C2). Asn-91 bears the Deamidated asparagine; in forms C1, C2 and C3; partial mark. Thr-97 carries the post-translational modification Phosphothreonine; in forms C2 and C3. Gln-102 is subject to Deamidated glutamine; in forms C1, C2 and C3; partial. Gln-102 is modified (deamidated glutamine; in form C1). At Arg-106 the chain carries Omega-N-methylarginine; in forms C1, C2 and C3; alternate. Arg-106 carries the post-translational modification Symmetric dimethylarginine; in forms C1, C2 and C3; alternate. Phosphoserine; in forms C2 and C3 occurs at positions 114 and 142. Residues 126–174 are disordered; that stretch reads SGKFYEHKSAHKGHKGSYHEGQGTLSKIFKLGGSGSRPGSRSGSPVARR. Deamidated glutamine; in forms C1, C2 and C3; partial is present on Gln-147. The segment covering 162–174 has biased composition (low complexity); sequence RPGSRSGSPVARR. A Phosphoserine; in forms C2 and C3 modification is found at Ser-165. Arg-166 carries the citrulline; in forms C2 and C3 modification. A Phosphoserine; in forms C2 and C3 modification is found at Ser-169.

This sequence belongs to the myelin basic protein family. Homodimer. In terms of processing, several charge isomers are produced as a result of optional post-translational modifications, such as phosphorylation of serine or threonine residues, deamidation of glutamine or asparagine residues, citrullination and methylation of arginine residues. Chicken MBP contains 4 charge components denoted as C1, C2, C3 and C8. C1 lacks any phosphorylation sites, whereas C2 and C3 contain respectively 10 and 8 phosphorylation sites and arginine residues modified to citrulline. All three charge components contain deamidated glutamines and asparagine, and a methylated arginine.

The protein localises to the myelin membrane. Is, with PLP, the most abundant protein component of the myelin membrane in the CNS. Has a role in both the formation and stabilization of this compact multilayer arrangement of bilayers. Each splice variant and charge isomer may have a specialized function in the assembly of an optimized, biochemically functional myelin membrane. The sequence is that of Myelin basic protein (MBP) from Gallus gallus (Chicken).